A 309-amino-acid polypeptide reads, in one-letter code: Elongation factor Ts (309 aa).

The involved in Mg(2+) ion dislocation from EF-Tu stretch occupies residues Thr82–Val85.

The protein belongs to the EF-Ts family.

It localises to the cytoplasm. Functionally, associates with the EF-Tu.GDP complex and induces the exchange of GDP to GTP. It remains bound to the aminoacyl-tRNA.EF-Tu.GTP complex up to the GTP hydrolysis stage on the ribosome. The protein is Elongation factor Ts of Rickettsia akari (strain Hartford).